A 237-amino-acid polypeptide reads, in one-letter code: MDKVCAVFGGSRGIGRAVAQLMARKGYRLAVIARNLEGAKAAAGDLGGDHLAFSCDVAKEHDVQNTFEELEKHLGRVNFLVNAAGINRDGLLVRTKTEDMVSQLHTNLLGSMLTCKAAMRTMIQQQGGSIVNVGSIVGLKGNSGQSVYSASKGGLVGFSRALAKEVARKKIRVNVVAPGFVHTDMTKDLKEEHLKKNIPLGRFGETIEVAHAVVFLLESPYITGHVLVVDGGLQLIL.

An N-acetylmethionine modification is found at M1. Residues S11–I14 and R34–N35 contribute to the NADP(+) site. K40 carries the post-translational modification N6-acetyllysine. NADP(+) is bound by residues D56 and A83 to G85. N6-acetyllysine is present on K96. S135 contributes to the substrate binding site. Residues Y148, K152, and V181–T183 contribute to the NADP(+) site. The Proton acceptor role is filled by Y148. K195 carries the post-translational modification N6-acetyllysine.

The protein belongs to the short-chain dehydrogenases/reductases (SDR) family. As to quaternary structure, homotetramer (in vitro). Heterotetramer with HSD17B8; contains two molecules each of HSD17B8 and CBR4. Does not form homotetramers when HSD17B8 is coexpressed, only heterotetramers (in vitro). In terms of tissue distribution, detected in liver and kidney (at protein level). Displays the highest expression in neuronal and muscle tissues.

It localises to the mitochondrion matrix. The enzyme catalyses a (3R)-hydroxyacyl-[ACP] + NADP(+) = a 3-oxoacyl-[ACP] + NADPH + H(+). It carries out the reaction a quinone + NADPH + H(+) = a quinol + NADP(+). The protein operates within lipid metabolism; fatty acid biosynthesis. Functionally, component of the heterotetramer complex KAR (3-ketoacyl-[acyl carrier protein] reductase or 3-ketoacyl-[ACP] reductase) that forms part of the mitochondrial fatty acid synthase (mtFAS). Beta-subunit of the KAR heterotetramer complex, responsible for the 3-ketoacyl-ACP reductase activity of the mtFAS, reduces 3-oxoacyl-[ACP] to (3R)-hydroxyacyl-[ACP] in a NADPH-dependent manner with no chain length preference, thereby participating in mitochondrial fatty acid biosynthesis. The homotetramer has NADPH-dependent quinone reductase activity (in vitro), hence could play a role in protection against cytotoxicity of exogenous quinones. As a heterotetramer, it can also reduce 9,10-phenanthrenequinone, 1,4-benzoquinone and various other o-quinones and p-quinones (in vitro). The polypeptide is 3-oxoacyl-[acyl-carrier-protein] reductase (CBR4) (Homo sapiens (Human)).